The primary structure comprises 699 residues: Elongation factor G (699 aa).

The region spanning 8–288 is the tr-type G domain; it reads EDYRNFGIMA…AVVDYLPSPL (281 aa). Residues 17 to 24, 86 to 90, and 140 to 143 each bind GTP; these read AHIDAGKT, DTPGH, and NKMD.

The protein belongs to the TRAFAC class translation factor GTPase superfamily. Classic translation factor GTPase family. EF-G/EF-2 subfamily.

It localises to the cytoplasm. Its function is as follows. Catalyzes the GTP-dependent ribosomal translocation step during translation elongation. During this step, the ribosome changes from the pre-translocational (PRE) to the post-translocational (POST) state as the newly formed A-site-bound peptidyl-tRNA and P-site-bound deacylated tRNA move to the P and E sites, respectively. Catalyzes the coordinated movement of the two tRNA molecules, the mRNA and conformational changes in the ribosome. In Rhizobium etli (strain CIAT 652), this protein is Elongation factor G.